A 217-amino-acid polypeptide reads, in one-letter code: Ribose-5-phosphate isomerase A (217 aa).

Residues 28–31, 81–84, and 94–97 contribute to the substrate site; these read TGST, DGAD, and KGGG. Residue Glu103 is the Proton acceptor of the active site. Substrate is bound at residue Lys121.

It belongs to the ribose 5-phosphate isomerase family. In terms of assembly, homodimer.

The catalysed reaction is aldehydo-D-ribose 5-phosphate = D-ribulose 5-phosphate. It participates in carbohydrate degradation; pentose phosphate pathway; D-ribose 5-phosphate from D-ribulose 5-phosphate (non-oxidative stage): step 1/1. Its function is as follows. Catalyzes the reversible conversion of ribose-5-phosphate to ribulose 5-phosphate. This Aeromonas salmonicida (strain A449) protein is Ribose-5-phosphate isomerase A.